The sequence spans 225 residues: 2-C-methyl-D-erythritol 4-phosphate cytidylyltransferase (225 aa).

It belongs to the IspD/TarI cytidylyltransferase family. IspD subfamily.

The enzyme catalyses 2-C-methyl-D-erythritol 4-phosphate + CTP + H(+) = 4-CDP-2-C-methyl-D-erythritol + diphosphate. It functions in the pathway isoprenoid biosynthesis; isopentenyl diphosphate biosynthesis via DXP pathway; isopentenyl diphosphate from 1-deoxy-D-xylulose 5-phosphate: step 2/6. Catalyzes the formation of 4-diphosphocytidyl-2-C-methyl-D-erythritol from CTP and 2-C-methyl-D-erythritol 4-phosphate (MEP). In Haemophilus influenzae (strain PittEE), this protein is 2-C-methyl-D-erythritol 4-phosphate cytidylyltransferase.